Consider the following 614-residue polypeptide: Putative N(6)-adenosine-methyltransferase MT-A70-like (614 aa).

The interval 59–78 is disordered; the sequence is TPPLTNFNPPKSSSLQQLPQ. Positions 67 to 78 are enriched in low complexity; the sequence is PPKSSSLQQLPQ. Residues 391-392 and Asp-409 each bind S-adenosyl-L-methionine; that span reads DI. Residues 479–492 form a positively charged region required for RNA-binding region; that stretch reads RIIRTGRTGHWLNH. Residues Lys-526, 549-552, and 562-563 each bind S-adenosyl-L-methionine; these read RMHN and NQ. Residues 589-614 are disordered; sequence PASPSRASAMELDSSVAAQTTTSAMM. The segment covering 604 to 614 has biased composition (polar residues); it reads VAAQTTTSAMM.

Belongs to the MT-A70-like family.

Its subcellular location is the nucleus. It carries out the reaction an adenosine in mRNA + S-adenosyl-L-methionine = an N(6)-methyladenosine in mRNA + S-adenosyl-L-homocysteine + H(+). Its function is as follows. Putative N6-methyltransferase that methylates adenosine residues of some mRNAs. N6-methyladenosine (m6A), which is present at internal sites of some mRNAs, may play a role in the efficiency of mRNA splicing, transport or translation. The sequence is that of Putative N(6)-adenosine-methyltransferase MT-A70-like from Medicago truncatula (Barrel medic).